We begin with the raw amino-acid sequence, 196 residues long: Small heat shock protein C3 (196 aa).

In terms of domain architecture, sHSP spans 88–196 (SAYSSSAIRT…EKDAKEIPIQ (109 aa)).

It belongs to the small heat shock protein (HSP20) family.

This Rickettsia felis (strain ATCC VR-1525 / URRWXCal2) (Rickettsia azadi) protein is Small heat shock protein C3 (hspc3-1).